Reading from the N-terminus, the 368-residue chain is Germination protease (368 aa).

Residues 1-16 (MKNNELDVNQFLIRTD) constitute a propeptide that is removed on maturation.

The protein belongs to the peptidase A25 family. Homotetramer. Post-translationally, autoproteolytically processed. The inactive tetrameric zymogen termed p46 autoprocesses to a smaller form termed p41, which is active only during spore germination.

The catalysed reaction is Endopeptidase action with P4 Glu or Asp, P1 preferably Glu &gt; Asp, P1' hydrophobic and P2' Ala.. Its function is as follows. Initiates the rapid degradation of small, acid-soluble proteins during spore germination. The sequence is that of Germination protease from Bacillus velezensis (strain DSM 23117 / BGSC 10A6 / LMG 26770 / FZB42) (Bacillus amyloliquefaciens subsp. plantarum).